The primary structure comprises 237 residues: Large ribosomal subunit protein uL1 (237 aa).

This sequence belongs to the universal ribosomal protein uL1 family. As to quaternary structure, part of the 50S ribosomal subunit.

Binds directly to 23S rRNA. The L1 stalk is quite mobile in the ribosome, and is involved in E site tRNA release. Functionally, protein L1 is also a translational repressor protein, it controls the translation of the L11 operon by binding to its mRNA. The sequence is that of Large ribosomal subunit protein uL1 from Solibacter usitatus (strain Ellin6076).